The sequence spans 422 residues: Gamma-glutamyl phosphate reductase (422 aa).

It belongs to the gamma-glutamyl phosphate reductase family.

It localises to the cytoplasm. The catalysed reaction is L-glutamate 5-semialdehyde + phosphate + NADP(+) = L-glutamyl 5-phosphate + NADPH + H(+). It participates in amino-acid biosynthesis; L-proline biosynthesis; L-glutamate 5-semialdehyde from L-glutamate: step 2/2. Its function is as follows. Catalyzes the NADPH-dependent reduction of L-glutamate 5-phosphate into L-glutamate 5-semialdehyde and phosphate. The product spontaneously undergoes cyclization to form 1-pyrroline-5-carboxylate. In Saccharophagus degradans (strain 2-40 / ATCC 43961 / DSM 17024), this protein is Gamma-glutamyl phosphate reductase.